We begin with the raw amino-acid sequence, 962 residues long: Activity-dependent neuroprotective protein 2a (962 aa).

The C2H2-type 1 zinc finger occupies 75 to 98 (LCCSLCWYSSRSVPTFRSHIHRCH). The C2H2-type 2; degenerate zinc finger occupies 108–130 (LMCPYCPFVSSPKVTEQHIQFFH). The C2H2-type 3; degenerate zinc finger occupies 165 to 188 (YTCATCGYHDSLLYVMKKHVLVNH). Residues 219-244 (YHCKLCKLPAETIEHLLYHILSSEKH) form a C2H2-type 4 zinc finger. The segment at 527–547 (VKCLRCKILLTEQGIFQHLLH) adopts a C2H2-type 5; degenerate zinc-finger fold. 2 C2H2-type zinc fingers span residues 549–572 (LKCL…KKEH) and 650–673 (NACP…QTKH). A C2H2-type 8; degenerate zinc finger spans residues 688–712 (YKCIYCFGVYTEKSTPKTISIHVQR). The disordered stretch occupies residues 753–781 (QGAPEFPKPKKEAVTPRNRRRNTKASKTG). The homeobox DNA-binding region spans 795–854 (PMGMERTSFEDRKDFLSQYFHRKPYVTKTEIELLASRLWINKADVKAHFNSKLTKCLKAI).

It is found in the nucleus. In terms of biological role, may be involved in transcriptional regulation. Required for progression through late erythroid differentiation. May be involved in vasculogenesis. The chain is Activity-dependent neuroprotective protein 2a from Danio rerio (Zebrafish).